A 138-amino-acid chain; its full sequence is Transcription antitermination protein NusB (138 aa).

Belongs to the NusB family.

In terms of biological role, involved in transcription antitermination. Required for transcription of ribosomal RNA (rRNA) genes. Binds specifically to the boxA antiterminator sequence of the ribosomal RNA (rrn) operons. The protein is Transcription antitermination protein NusB of Serratia proteamaculans (strain 568).